A 195-amino-acid chain; its full sequence is Imidazoleglycerol-phosphate dehydratase (195 aa).

This sequence belongs to the imidazoleglycerol-phosphate dehydratase family.

The protein resides in the cytoplasm. The catalysed reaction is D-erythro-1-(imidazol-4-yl)glycerol 3-phosphate = 3-(imidazol-4-yl)-2-oxopropyl phosphate + H2O. The protein operates within amino-acid biosynthesis; L-histidine biosynthesis; L-histidine from 5-phospho-alpha-D-ribose 1-diphosphate: step 6/9. This chain is Imidazoleglycerol-phosphate dehydratase, found in Polynucleobacter asymbioticus (strain DSM 18221 / CIP 109841 / QLW-P1DMWA-1) (Polynucleobacter necessarius subsp. asymbioticus).